A 93-amino-acid chain; its full sequence is Defensin-like protein 229 (93 aa).

The N-terminal stretch at methionine 1–serine 19 is a signal peptide. 4 disulfides stabilise this stretch: cysteine 38–cysteine 93, cysteine 48–cysteine 72, cysteine 56–cysteine 84, and cysteine 70–cysteine 86.

The protein belongs to the DEFL family. In terms of tissue distribution, flower buds.

It is found in the secreted. In Arabidopsis thaliana (Mouse-ear cress), this protein is Defensin-like protein 229 (SCRL27).